The following is a 331-amino-acid chain: Cytoplasmic envelopment protein 1 (331 aa).

Belongs to the herpesviridae cytoplasmic envelopment protein 1 family. Interacts with protein ORF7; this interaction localizes protein ORF53 to the host trans-Golgi network (TGN).

Its subcellular location is the virion. It localises to the virion tegument. The protein resides in the host cytoplasm. The protein localises to the host Golgi apparatus. In terms of biological role, plays a critical role in cytoplasmic virus egress. Participates in the final step of tegumentation and envelope acquisition within the host cytoplasm. This is Cytoplasmic envelopment protein 1 (ORF53) from Varicella-zoster virus (strain Dumas) (HHV-3).